Reading from the N-terminus, the 260-residue chain is UPF0246 protein APP7_0648 (260 aa).

Belongs to the UPF0246 family.

This chain is UPF0246 protein APP7_0648, found in Actinobacillus pleuropneumoniae serotype 7 (strain AP76).